Here is a 690-residue protein sequence, read N- to C-terminus: MFCRKFKDLKITGECPFSLLAPGQVPTEPIEEVAGVSESCQATLPTCQEFAENAEGSHPQRKTSRNRVYLHTLAESIGKLIFPEFERLNLALQRTLAKHKIKENRNSSEKEDLERIIAEEAIAAGVPVEVLKDSLGEELFKICYEEDEHILGVVGGTLKDFLNSFSTLLKQSSHCQEAERRGRLEDASILCLDKDQDFLNVYYFFPKRTTALLLPGIIKAAARILYESHVEVSLMPPCFRSECTEFVNQPYLLYSVHVKSTKPSLSPGKPQSSLVIPTSLFCKTFPFHFMLDRDLAILQLGNGIRRLVNKRDFQGKPNFEEFFEILTPKINQTFSGIMTMLNMQFVIRVRRWDNLVKKSSRVMDLKGQMIYIVESSAILFLGSPCVDRLEDFTGRGLYLSDIPIHNALRDVVLIGEQARAQDGLKKRLGKLKATLEHAHQALEEEKKKTVDLLCSIFPSEVAQQLWQGQIVQAKKFNEVTMLFSDIVGFTAICSQCSPLQVITMLNALYTRFDQQCGELDVYKVETIGDAYCVAGGLHRESDTHAVQIALMALKMMELSNEVMSPHGEPIKMRIGLHSGSVFAGVVGVKMPRYCLFGNNVTLANKFESCSVPRKINVSPTTYRLLKDCPGFVFTPRSREELPPNFPSDIPGICHFLDAYQHQGPNSKPWFQQKDAEDGNANFLGKASGVD.

Serine 266 is subject to Phosphoserine. The Guanylate cyclase domain occupies 480-607 (TMLFSDIVGF…NNVTLANKFE (128 aa)).

This sequence belongs to the adenylyl cyclase class-4/guanylyl cyclase family. In terms of assembly, the active enzyme is formed by a heterodimer of an alpha and a beta subunit. Heterodimer with GUCY1B1. Mg(2+) serves as cofactor. Mn(2+) is required as a cofactor.

The protein resides in the cytoplasm. It catalyses the reaction GTP = 3',5'-cyclic GMP + diphosphate. Activated by nitric oxide in the presence of magnesium or manganese ions. In Rattus norvegicus (Rat), this protein is Guanylate cyclase soluble subunit alpha-1 (Gucy1a1).